Consider the following 474-residue polypeptide: tRNA-2-methylthio-N(6)-dimethylallyladenosine synthase (474 aa).

The region spanning 3–120 (KKLHIKTWGC…LPEMINHVQG (118 aa)) is the MTTase N-terminal domain. [4Fe-4S] cluster contacts are provided by Cys12, Cys49, Cys83, Cys157, Cys161, and Cys164. One can recognise a Radical SAM core domain in the interval 143–375 (RAEGPTAFVS…QQRISQQAME (233 aa)). A TRAM domain is found at 378 to 441 (RKMVGTVQRV…ASSLRGILLR (64 aa)).

Belongs to the methylthiotransferase family. MiaB subfamily. In terms of assembly, monomer. [4Fe-4S] cluster is required as a cofactor.

The protein resides in the cytoplasm. It carries out the reaction N(6)-dimethylallyladenosine(37) in tRNA + (sulfur carrier)-SH + AH2 + 2 S-adenosyl-L-methionine = 2-methylsulfanyl-N(6)-dimethylallyladenosine(37) in tRNA + (sulfur carrier)-H + 5'-deoxyadenosine + L-methionine + A + S-adenosyl-L-homocysteine + 2 H(+). Catalyzes the methylthiolation of N6-(dimethylallyl)adenosine (i(6)A), leading to the formation of 2-methylthio-N6-(dimethylallyl)adenosine (ms(2)i(6)A) at position 37 in tRNAs that read codons beginning with uridine. This Yersinia pestis bv. Antiqua (strain Antiqua) protein is tRNA-2-methylthio-N(6)-dimethylallyladenosine synthase.